The sequence spans 677 residues: DNA ligase (677 aa).

Residues 34–38, 83–84, and E117 each bind NAD(+); these read DAEYD and SL. K119 acts as the N6-AMP-lysine intermediate in catalysis. NAD(+)-binding residues include R140, E175, K283, and K307. 4 residues coordinate Zn(2+): C401, C404, C419, and C425. The BRCT domain maps to 594 to 677; the sequence is SHLSLLHGKT…QYISPNTNEN (84 aa).

This sequence belongs to the NAD-dependent DNA ligase family. LigA subfamily. Mg(2+) is required as a cofactor. Mn(2+) serves as cofactor.

It catalyses the reaction NAD(+) + (deoxyribonucleotide)n-3'-hydroxyl + 5'-phospho-(deoxyribonucleotide)m = (deoxyribonucleotide)n+m + AMP + beta-nicotinamide D-nucleotide.. Its function is as follows. DNA ligase that catalyzes the formation of phosphodiester linkages between 5'-phosphoryl and 3'-hydroxyl groups in double-stranded DNA using NAD as a coenzyme and as the energy source for the reaction. It is essential for DNA replication and repair of damaged DNA. The sequence is that of DNA ligase from Ehrlichia canis (strain Jake).